Reading from the N-terminus, the 159-residue chain is Allergen Arg r 1 (159 aa).

Residues 1–16 (MALIILLVACLSVVSA) form the signal peptide. Intrachain disulfides connect Cys50/Cys155 and Cys109/Cys134.

It belongs to the calycin superfamily. Histamine-binding salivary protein family. Not glycosylated.

It localises to the secreted. This is Allergen Arg r 1 from Argas reflexus (European pigeon tick).